We begin with the raw amino-acid sequence, 413 residues long: Succinate--CoA ligase [ADP-forming] subunit beta, mitochondrial (413 aa).

A mitochondrion-targeting transit peptide spans 1–2; it reads RR. In terms of domain architecture, ATP-grasp spans 11–238; that stretch reads MGLLQEAGIS…SNSAYRQKKI (228 aa). ATP is bound by residues lysine 48 and 55-57; that span reads GRG. Mg(2+) is bound by residues asparagine 208 and aspartate 222. Residues asparagine 273 and 330-332 each bind substrate; that span reads GIM.

The protein belongs to the succinate/malate CoA ligase beta subunit family. ATP-specific subunit beta subfamily. Heterodimer of an alpha and a beta subunit. The beta subunit determines specificity for ATP. Requires Mg(2+) as cofactor. Widely expressed. Not present in liver.

The protein resides in the mitochondrion. The enzyme catalyses succinate + ATP + CoA = succinyl-CoA + ADP + phosphate. It participates in carbohydrate metabolism; tricarboxylic acid cycle; succinate from succinyl-CoA (ligase route): step 1/1. Functionally, ATP-specific succinyl-CoA synthetase functions in the citric acid cycle (TCA), coupling the hydrolysis of succinyl-CoA to the synthesis of ATP and thus represents the only step of substrate-level phosphorylation in the TCA. The beta subunit provides nucleotide specificity of the enzyme and binds the substrate succinate, while the binding sites for coenzyme A and phosphate are found in the alpha subunit. This is Succinate--CoA ligase [ADP-forming] subunit beta, mitochondrial from Columba livia (Rock dove).